Consider the following 458-residue polypeptide: Zinc finger protein 19 (458 aa).

The KRAB domain occupies 14–85; the sequence is VTFEDVAVHF…EAQDDPPAER (72 aa). 9 consecutive C2H2-type zinc fingers follow at residues 161–183, 189–211, 217–239, 245–267, 273–295, 301–323, 329–351, 357–379, and 385–407; these read FICE…QRIH, FECS…QRIH, YQCE…QRIH, YYCT…QRIH, YECN…QKIH, YECN…QRIH, YSCK…QRIH, FDCV…LRIH, and YVCD…QRIH. A C2H2-type 10; atypical zinc finger spans residues 413-433; sequence YECSKYEKAFGTSSQLGHLEH.

The protein belongs to the krueppel C2H2-type zinc-finger protein family.

The protein localises to the nucleus. Its function is as follows. May be involved in transcriptional regulation. The sequence is that of Zinc finger protein 19 (ZNF19) from Homo sapiens (Human).